The chain runs to 183 residues: Acireductone dioxygenase (183 aa).

Residues 1–21 (MVQAWYMDSDTTTDQREEHQL) form a disordered region. Positions 90, 92, 96, and 135 each coordinate Fe(2+). His-90, His-92, Glu-96, and His-135 together coordinate Ni(2+).

This sequence belongs to the acireductone dioxygenase (ARD) family. Fe(2+) is required as a cofactor. Requires Ni(2+) as cofactor.

It localises to the cytoplasm. The protein localises to the nucleus. The enzyme catalyses 1,2-dihydroxy-5-(methylsulfanyl)pent-1-en-3-one + O2 = 4-methylsulfanyl-2-oxobutanoate + formate + 2 H(+). It catalyses the reaction 1,2-dihydroxy-5-(methylsulfanyl)pent-1-en-3-one + O2 = 3-(methylsulfanyl)propanoate + CO + formate + 2 H(+). Its pathway is amino-acid biosynthesis; L-methionine biosynthesis via salvage pathway; L-methionine from S-methyl-5-thio-alpha-D-ribose 1-phosphate: step 5/6. In terms of biological role, catalyzes 2 different reactions between oxygen and the acireductone 1,2-dihydroxy-3-keto-5-methylthiopentene (DHK-MTPene) depending upon the metal bound in the active site. Fe-containing acireductone dioxygenase (Fe-ARD) produces formate and 2-keto-4-methylthiobutyrate (KMTB), the alpha-ketoacid precursor of methionine in the methionine recycle pathway. Ni-containing acireductone dioxygenase (Ni-ARD) produces methylthiopropionate, carbon monoxide and formate, and does not lie on the methionine recycle pathway. This chain is Acireductone dioxygenase, found in Ixodes scapularis (Black-legged tick).